A 238-amino-acid polypeptide reads, in one-letter code: Peroxisomal coenzyme A diphosphatase NUDT7 (238 aa).

Lys-20 carries the post-translational modification N6-succinyllysine. The Nudix hydrolase domain occupies 37 to 172 (YNKYSVLLPL…VTRLGHRFIN (136 aa)). The short motif at 77 to 98 (KRDPTDMDDAATALREAQEEVG) is the Nudix box element. Positions 92 and 96 each coordinate Mg(2+). A Microbody targeting signal motif is present at residues 236 to 238 (SRL).

It belongs to the Nudix hydrolase family. PCD1 subfamily. As to quaternary structure, monomer. It depends on Mn(2+) as a cofactor. The cofactor is Mg(2+). As to expression, expressed in liver, kidney, pancreas, pituitary, small intestine, spleen, heart and placenta. Weakly expressed in brain.

Its subcellular location is the peroxisome. It carries out the reaction hexanoyl-CoA + H2O = hexanoyl-4'-phosphopantetheine + adenosine 3',5'-bisphosphate + 2 H(+). It catalyses the reaction octanoyl-CoA + H2O = S-octanoyl-4'-phosphopantetheine + adenosine 3',5'-bisphosphate + 2 H(+). The catalysed reaction is butanoyl-CoA + H2O = S-butanoyl-4'-phosphopantetheine + adenosine 3',5'-bisphosphate + 2 H(+). The enzyme catalyses decanoyl-CoA + H2O = decanoyl-4'-phosphopantetheine + adenosine 3',5'-bisphosphate + 2 H(+). It carries out the reaction dodecanoyl-CoA + H2O = S-dodecanoyl-4'-phosphopantetheine + adenosine 3',5'-bisphosphate + 2 H(+). It catalyses the reaction tetradecanoyl-CoA + H2O = tetradecanoyl-4'-phosphopantetheine + adenosine 3',5'-bisphosphate + 2 H(+). The catalysed reaction is choloyl-CoA + H2O = S-choloyl-4'-phosphopantetheine + adenosine 3',5'-bisphosphate + 2 H(+). The enzyme catalyses 3alpha,7alpha,12alpha-trihydroxy-5beta-cholestan-26-oyl-CoA + H2O = 3alpha,7alpha,12alpha-trihydroxy-5beta-cholestan-26-oyl-4'-phosphopantetheine + adenosine 3',5'-bisphosphate + 2 H(+). It carries out the reaction acetyl-CoA + H2O = S-acetyl-4'-phosphopantetheine + adenosine 3',5'-bisphosphate + 2 H(+). It catalyses the reaction CoA + H2O = (R)-4'-phosphopantetheine + adenosine 3',5'-bisphosphate + 2 H(+). The catalysed reaction is propanoyl-CoA + H2O = propanoyl-4'-phosphopantetheine + adenosine 3',5'-bisphosphate + 2 H(+). The enzyme catalyses malonyl-CoA + H2O = malonyl-4'-phosphopantetheine + adenosine 3',5'-bisphosphate + 2 H(+). It carries out the reaction succinyl-CoA + H2O = succinyl-4'-phosphopantetheine + adenosine 3',5'-bisphosphate + 2 H(+). It catalyses the reaction a 5'-end CoA-ribonucleoside in mRNA + H2O = a 5'-end phospho-adenosine-phospho-ribonucleoside in mRNA + (R)-4'-phosphopantetheine + 2 H(+). With respect to regulation, inhibited by fluoride. In terms of biological role, fatty acyl-coenzyme A (CoA) diphosphatase that hydrolyzes fatty acyl-CoA to yield acyl-4'-phosphopantetheine and adenosine 3',5'-bisphosphate. Cleaves CoA, CoA esters and oxidized CoA with similar efficiencies. Preferentially hydrolyzes medium-chain acyl-CoAs and bile acid-CoAs. Has no activity toward NDP-sugars, CDP-alcohols, (deoxy)nucleoside 5'-triphosphates, nucleoside 5'-di or monophosphates, diadenosine polyphosphates, NAD, NADH, NADP, NADPH or thymidine-5'-monophospho-p-nitrophenyl ester. May be required to eliminate oxidized CoA from peroxisomes, or regulate CoA and acyl-CoA levels in this organelle in response to metabolic demand. Does not play a role in U8 snoRNA decapping activity. Binds U8 snoRNA. Exhibits decapping activity towards dpCoA-capped RNAs in vitro. In Homo sapiens (Human), this protein is Peroxisomal coenzyme A diphosphatase NUDT7.